Here is a 184-residue protein sequence, read N- to C-terminus: Dual specificity protein phosphatase 22 (184 aa).

A lipid anchor (N-myristoyl glycine) is attached at Gly-2. Residues 4–144 (GMSQILPGLY…LQEFEKHEVH (141 aa)) form the Tyrosine-protein phosphatase domain. The Phosphocysteine intermediate role is filled by Cys-88. The a protein site is built by Leu-89, Ala-90, Val-92, Ser-93, and Arg-94.

The protein belongs to the protein-tyrosine phosphatase family. Non-receptor class dual specificity subfamily. Monomer. Interacts with LCK; the interaction is direct. Interacts with UBR2; the interaction is direct. In terms of processing, myristoylation regulates subcellular location, and is necessary for activation of JNK.

The protein resides in the cytoplasm. It catalyses the reaction O-phospho-L-tyrosyl-[protein] + H2O = L-tyrosyl-[protein] + phosphate. It carries out the reaction O-phospho-L-seryl-[protein] + H2O = L-seryl-[protein] + phosphate. The enzyme catalyses O-phospho-L-threonyl-[protein] + H2O = L-threonyl-[protein] + phosphate. Functionally, dual specificity phosphatase; can dephosphorylate both phosphotyrosine and phosphoserine or phosphothreonine residues. Activates the JNK signaling pathway. Inhibits T-cell receptor signaling and T-cell mediated immune responses, acting, at least in part, by inducing degradation of E3 ubiquitin ligase UBR2. Dephosphorylates and thereby induces 'Lys-48'-linked ubiquitination of UBR2, leading to proteasomal degradation of UBR2. Dephosphorylates and thereby inactivates tyrosine kinase LCK. Inhibits UBR2-mediated 'Lys-63'-linked ubiquitination of LCK. May play a role in B-cell receptor (BCR) signaling and B-cell function. The protein is Dual specificity protein phosphatase 22 (Dusp22) of Mus musculus (Mouse).